The primary structure comprises 279 residues: NADPH-dependent 7-cyano-7-deazaguanine reductase (279 aa).

86–88 provides a ligand contact to substrate; sequence IES. Residue 88–89 coordinates NADPH; it reads SK. The active-site Thioimide intermediate is the Cys-187. Asp-194 functions as the Proton donor in the catalytic mechanism. 226-227 provides a ligand contact to substrate; sequence HE. Residue 255 to 256 participates in NADPH binding; the sequence is RG.

It belongs to the GTP cyclohydrolase I family. QueF type 2 subfamily. In terms of assembly, homodimer.

Its subcellular location is the cytoplasm. It carries out the reaction 7-aminomethyl-7-carbaguanine + 2 NADP(+) = 7-cyano-7-deazaguanine + 2 NADPH + 3 H(+). The protein operates within tRNA modification; tRNA-queuosine biosynthesis. Its function is as follows. Catalyzes the NADPH-dependent reduction of 7-cyano-7-deazaguanine (preQ0) to 7-aminomethyl-7-deazaguanine (preQ1). The polypeptide is NADPH-dependent 7-cyano-7-deazaguanine reductase (Actinobacillus pleuropneumoniae serotype 5b (strain L20)).